A 571-amino-acid polypeptide reads, in one-letter code: Proline--tRNA ligase (571 aa).

It belongs to the class-II aminoacyl-tRNA synthetase family. ProS type 1 subfamily. In terms of assembly, homodimer.

It is found in the cytoplasm. It catalyses the reaction tRNA(Pro) + L-proline + ATP = L-prolyl-tRNA(Pro) + AMP + diphosphate. Catalyzes the attachment of proline to tRNA(Pro) in a two-step reaction: proline is first activated by ATP to form Pro-AMP and then transferred to the acceptor end of tRNA(Pro). As ProRS can inadvertently accommodate and process non-cognate amino acids such as alanine and cysteine, to avoid such errors it has two additional distinct editing activities against alanine. One activity is designated as 'pretransfer' editing and involves the tRNA(Pro)-independent hydrolysis of activated Ala-AMP. The other activity is designated 'posttransfer' editing and involves deacylation of mischarged Ala-tRNA(Pro). The misacylated Cys-tRNA(Pro) is not edited by ProRS. This Pseudomonas syringae pv. tomato (strain ATCC BAA-871 / DC3000) protein is Proline--tRNA ligase.